Consider the following 214-residue polypeptide: Fruiting body protein SC14 (214 aa).

An N-terminal signal peptide occupies residues 1 to 18; the sequence is MKLNIAILLAALAATASA. N-linked (GlcNAc...) asparagine glycosylation is found at Asn61 and Asn144. In terms of domain architecture, SCP spans 72–195; that stretch reads LTAHNDERAQ…KSLWYYVCNY (124 aa).

The protein belongs to the CRISP family.

Its subcellular location is the secreted. The polypeptide is Fruiting body protein SC14 (SC14) (Schizophyllum commune (Split gill fungus)).